We begin with the raw amino-acid sequence, 200 residues long: Cysteine dioxygenase type 1 (200 aa).

Histidine 86, histidine 88, and histidine 140 together coordinate Fe cation. A cross-link (3'-(S-cysteinyl)-tyrosine (Cys-Tyr)) is located at residues 93 to 157 (CFLKMLQGNL…TEPAVSLHLY (65 aa)).

The protein belongs to the cysteine dioxygenase family. In terms of assembly, monomer. Requires Fe cation as cofactor. Ni(2+) serves as cofactor. The cofactor is Zn(2+). In terms of processing, the thioether cross-link between Cys-93 and Tyr-157 plays a structural role through stabilizing the Fe(2+) ion, and prevents the production of highly damaging free hydroxyl radicals by holding the oxygen radical via hydroxyl hydrogen.

The enzyme catalyses L-cysteine + O2 = 3-sulfino-L-alanine + H(+). The protein operates within organosulfur biosynthesis; taurine biosynthesis; hypotaurine from L-cysteine: step 1/2. In terms of biological role, catalyzes the oxidation of cysteine to cysteine sulfinic acid with addition of molecular dioxygen. This is Cysteine dioxygenase type 1 (CDO1) from Bos taurus (Bovine).